Consider the following 463-residue polypeptide: Metalloprotease slr0863 (463 aa).

Belongs to the peptidase U62 family.

Probable metalloprotease. The chain is Metalloprotease slr0863 from Synechocystis sp. (strain ATCC 27184 / PCC 6803 / Kazusa).